Consider the following 225-residue polypeptide: Thymidylate kinase (225 aa).

10-17 provides a ligand contact to ATP; the sequence is GPEGAGKT.

Belongs to the thymidylate kinase family.

It carries out the reaction dTMP + ATP = dTDP + ADP. Its function is as follows. Phosphorylation of dTMP to form dTDP in both de novo and salvage pathways of dTTP synthesis. The chain is Thymidylate kinase from Geobacillus thermodenitrificans (strain NG80-2).